A 37-amino-acid polypeptide reads, in one-letter code: Esculentin-2B (37 aa).

A disulfide bridge connects residues Cys-31 and Cys-37.

Expressed by the skin glands.

Its subcellular location is the secreted. Functionally, antibacterial activity against Gram-positive bacterium S.aureus and Gram-negative bacterium E.coli. Has activity against C.albicans. The chain is Esculentin-2B from Lithobates berlandieri (Rio Grande leopard frog).